A 487-amino-acid polypeptide reads, in one-letter code: Polyamine oxidase 4 (487 aa).

4 residues coordinate FAD: Glu-53, Arg-61, Val-242, and Glu-429. Residues 485–487 carry the Microbody targeting signal motif; the sequence is CRT.

The protein belongs to the flavin monoamine oxidase family. The cofactor is FAD. Widely expressed.

The protein localises to the peroxisome. The enzyme catalyses spermine + O2 + H2O = 3-aminopropanal + spermidine + H2O2. It catalyses the reaction norspermine + O2 + H2O = norspermidine + 3-aminopropanal + H2O2. It carries out the reaction thermospermine + O2 + H2O = 3-aminopropanal + spermidine + H2O2. Its pathway is amine and polyamine degradation; spermine degradation. Flavoenzyme involved in polyamine back-conversion. Catalyzes the oxidation of the secondary amino group of polyamines, such as spermine. Substrate preference is spermine &gt; thermospermine &gt; norspermine. No activity detected when putrescine, spermidine or N(1)-acetylspermidine are used as substrates. Plays an important role in the regulation of polyamine intracellular concentration. The polypeptide is Polyamine oxidase 4 (Oryza sativa subsp. japonica (Rice)).